The primary structure comprises 309 residues: HTH-type transcriptional regulator MetR (309 aa).

Positions 6–63 constitute an HTH lysR-type domain; that stretch reads LEFRHLKTLLALKETGSVSLAAKRVYLTQSALSHQIKLIEEQFGLPLFERKSNPLRFT. The H-T-H motif DNA-binding region spans 23–42; the sequence is VSLAAKRVYLTQSALSHQIK.

This sequence belongs to the LysR transcriptional regulatory family.

Its subcellular location is the cytoplasm. In terms of biological role, control of the last step in methionine biosynthesis; MetR is a positive activator of the metA, metE and metH genes. The protein is HTH-type transcriptional regulator MetR (metR) of Haemophilus influenzae (strain ATCC 51907 / DSM 11121 / KW20 / Rd).